The chain runs to 162 residues: Phenazine biosynthesis protein PhzA1 (162 aa).

It belongs to the PhzA/PhzB family.

It participates in antibiotic biosynthesis; phenazine biosynthesis. Functionally, involved in the biosynthesis of the antibiotic phenazine, a nitrogen-containing heterocyclic molecule. PhzA1 (operon phzA1B1C1E1F1G1) has a role in the biosynthesis of the phenazine during planktonic growth. The sequence is that of Phenazine biosynthesis protein PhzA1 from Pseudomonas aeruginosa (strain ATCC 15692 / DSM 22644 / CIP 104116 / JCM 14847 / LMG 12228 / 1C / PRS 101 / PAO1).